A 558-amino-acid polypeptide reads, in one-letter code: Polypeptide N-acetylgalactosaminyltransferase 16 (558 aa).

Over 1–6 (MRKIRA) the chain is Cytoplasmic. The chain crosses the membrane as a helical; Signal-anchor for type II membrane protein span at residues 7–26 (NAIAILTVAWILGTFYYLWQ). The Lumenal segment spans residues 27 to 558 (DNRAHAASSS…AQQWQLLPHT (532 aa)). Low complexity predominate over residues 34-46 (SSSGRGAQRAGGR). Residues 34–53 (SSSGRGAQRAGGRPEQLRED) are disordered. 5 cysteine pairs are disulfide-bonded: C113-C340, C331-C409, C441-C460, C486-C506, and C530-C543. The interval 122 to 227 (LPATSVIITF…VEWLQPMLQR (106 aa)) is catalytic subdomain A. Substrate-binding residues include D163 and R188. Position 211 (D211) interacts with Mn(2+). Residue S212 coordinates substrate. Mn(2+) is bound at residue H213. The segment at 286-348 (PIRTPVIAGG…PCSRVGHVFR (63 aa)) is catalytic subdomain B. W317 provides a ligand contact to substrate. H345 provides a ligand contact to Mn(2+). Positions 348, 351, and 353 each coordinate substrate. Residues 428 to 555 (KEVLPGVIKQ…DAQAQQWQLL (128 aa)) form the Ricin B-type lectin domain.

It belongs to the glycosyltransferase 2 family. GalNAc-T subfamily. It depends on Mn(2+) as a cofactor. In the CNS, it is predominantly expressed in several distinct hypothalamic, thalamic and amygdaloid nuclei. The most abundant level of expression is in the paraventricular, ventromedial and arcuate nuclei of the hypothalamus, the anterodorsal and parafascicular nuclei of the thalamus and the central, basomedial and medial nuclei of the amygdala. Also expressed in cerebral cortex, lateral septum, habenula and hippocampus.

The protein localises to the golgi apparatus membrane. It catalyses the reaction L-seryl-[protein] + UDP-N-acetyl-alpha-D-galactosamine = a 3-O-[N-acetyl-alpha-D-galactosaminyl]-L-seryl-[protein] + UDP + H(+). The catalysed reaction is L-threonyl-[protein] + UDP-N-acetyl-alpha-D-galactosamine = a 3-O-[N-acetyl-alpha-D-galactosaminyl]-L-threonyl-[protein] + UDP + H(+). Its pathway is protein modification; protein glycosylation. Its function is as follows. Catalyzes the initial reaction in O-linked oligosaccharide biosynthesis, the transfer of an N-acetyl-D-galactosamine residue to a serine or threonine residue on the protein receptor. In Mus musculus (Mouse), this protein is Polypeptide N-acetylgalactosaminyltransferase 16 (Galnt16).